The following is a 125-amino-acid chain: Interferon-induced transmembrane protein 1 (125 aa).

Residues 1–36 (MHKEEHEVAVLGPPPSTILPRSTVINIHSETSVPDH) lie on the Cytoplasmic side of the membrane. The residue at position 16 (Ser16) is a Phosphoserine. Positions 37–57 (VVWSLFNTLFLNWCCLGFIAF) form an intramembrane region, helical. Residues Cys50, Cys51, and Cys84 are each lipidated (S-palmitoyl cysteine). The Cytoplasmic portion of the chain corresponds to 58–86 (AYSVKSRDRKMVGDVTGAQAYASTAKCLN). Residues 84-125 (CLNIWALILGILMTIGFILLLVFGSVTVYHIMLQIIQEKRGY) are interaction with CAV1. A helical transmembrane segment spans residues 87–107 (IWALILGILMTIGFILLLVFG). The Extracellular portion of the chain corresponds to 108-125 (SVTVYHIMLQIIQEKRGY).

This sequence belongs to the CD225/Dispanin family. Interacts with CD81. Part of a complex composed of CD19, CR2/CD21, CD81 and IFITM1/CD225 in the membrane of mature B-cells. Interacts with CAV1; this interaction enhances the ability of CAV1 in inhibiting ERK activation. In terms of processing, palmitoylation on membrane-proximal cysteines controls clustering in membrane compartments and antiviral activity. Bone (at protein level). Levels greatly elevated in colon cancer, cervical cancer, esophageal cancer and ovarian cancer. Expressed in glioma cell lines.

It is found in the cell membrane. It localises to the lysosome membrane. In terms of biological role, IFN-induced antiviral protein which inhibits the entry of viruses to the host cell cytoplasm, permitting endocytosis, but preventing subsequent viral fusion and release of viral contents into the cytosol. Active against multiple viruses, including influenza A virus, SARS coronaviruses (SARS-CoV and SARS-CoV-2), Marburg virus (MARV), Ebola virus (EBOV), Dengue virus (DNV), West Nile virus (WNV), human immunodeficiency virus type 1 (HIV-1) and hepatitis C virus (HCV). Can inhibit: influenza virus hemagglutinin protein-mediated viral entry, MARV and EBOV GP1,2-mediated viral entry and SARS-CoV and SARS-CoV-2 S protein-mediated viral entry. Also implicated in cell adhesion and control of cell growth and migration. Inhibits SARS-CoV-2 S protein-mediated syncytia formation. Plays a key role in the antiproliferative action of IFN-gamma either by inhibiting the ERK activation or by arresting cell growth in G1 phase in a p53-dependent manner. Acts as a positive regulator of osteoblast differentiation. In hepatocytes, IFITM proteins act in a coordinated manner to restrict HCV infection by targeting the endocytosed HCV virion for lysosomal degradation. IFITM2 and IFITM3 display anti-HCV activity that may complement the anti-HCV activity of IFITM1 by inhibiting the late stages of HCV entry, possibly in a coordinated manner by trapping the virion in the endosomal pathway and targeting it for degradation at the lysosome. This is Interferon-induced transmembrane protein 1 from Homo sapiens (Human).